Reading from the N-terminus, the 268-residue chain is Phosphate import ATP-binding protein PstB 3 (268 aa).

The region spanning 15-254 (LRTENLNVYY…DATESIFNNP (240 aa)) is the ABC transporter domain. Position 47–54 (47–54 (GPSGCGKS)) interacts with ATP.

This sequence belongs to the ABC transporter superfamily. Phosphate importer (TC 3.A.1.7) family. The complex is composed of two ATP-binding proteins (PstB), two transmembrane proteins (PstC and PstA) and a solute-binding protein (PstS).

The protein resides in the cell inner membrane. The enzyme catalyses phosphate(out) + ATP + H2O = ADP + 2 phosphate(in) + H(+). Functionally, part of the ABC transporter complex PstSACB involved in phosphate import. Responsible for energy coupling to the transport system. This Nostoc sp. (strain PCC 7120 / SAG 25.82 / UTEX 2576) protein is Phosphate import ATP-binding protein PstB 3.